The chain runs to 89 residues: Large ribosomal subunit protein bL27 (89 aa).

Residues 1–21 (MAHKKAGGSSRNGRDSQSKRL) are disordered.

This sequence belongs to the bacterial ribosomal protein bL27 family.

The chain is Large ribosomal subunit protein bL27 from Rhizobium rhizogenes (strain K84 / ATCC BAA-868) (Agrobacterium radiobacter).